The sequence spans 375 residues: N5-carboxyaminoimidazole ribonucleotide synthase (375 aa).

Residues arginine 108, lysine 148, 153-159, 183-186, glutamate 191, histidine 214, and 268-269 contribute to the ATP site; these read GYDGKGQ, EQYL, and NE. One can recognise an ATP-grasp domain in the interval 112–298; sequence KQTLQDSGSN…QFDTHIKAIT (187 aa).

Belongs to the PurK/PurT family. As to quaternary structure, homodimer.

The catalysed reaction is 5-amino-1-(5-phospho-beta-D-ribosyl)imidazole + hydrogencarbonate + ATP = 5-carboxyamino-1-(5-phospho-D-ribosyl)imidazole + ADP + phosphate + 2 H(+). Its pathway is purine metabolism; IMP biosynthesis via de novo pathway; 5-amino-1-(5-phospho-D-ribosyl)imidazole-4-carboxylate from 5-amino-1-(5-phospho-D-ribosyl)imidazole (N5-CAIR route): step 1/2. Catalyzes the ATP-dependent conversion of 5-aminoimidazole ribonucleotide (AIR) and HCO(3)(-) to N5-carboxyaminoimidazole ribonucleotide (N5-CAIR). This chain is N5-carboxyaminoimidazole ribonucleotide synthase, found in Staphylococcus saprophyticus subsp. saprophyticus (strain ATCC 15305 / DSM 20229 / NCIMB 8711 / NCTC 7292 / S-41).